The primary structure comprises 736 residues: MEIGTEISRKIRSAIKGKLQELGAYVDEELPDYIMVMVANKKSQDQMTEDLSLFLGNNTIRFTVWLHGVLDKLRSVTTEPSSLKSPDTSIFDSNVPSNKSSFSRGDERRHEAAIPPLAVSSSRPEKRDSRVSTSSQEHKSTNVRHSYDDGASTRLMSTVKPLREPAPSEDVIDIKPEPDDLIDEDLNFVQENSLSQKKPTVTLTYGSSRPSIEIYRPPASRNADTGTHLNRPQLQQQQSSTHTAKQLDGQSSQVYEAGRLCEPEVLGSVEDTYSPFFRNNLDKMNIEEENFRKRKLPVVSSVVKVKRFSHDGEEEEEDEDYGTRVGSLSSSVSVPAKPERRPSLPPSKQANKNLILKAISEAQESVTKTTNYPAVPQKQTLPVAPRTRTSQEEVLAEMVQGQNRAPRISPPVKEEEAKGDNAEKIEGTQQRQLLSRLQIDPVTVDTMELSQDYYDMESMVHADTRSFILKKPKLSEEIVVTPNQDSGMKTADALRVLSGHLMQTRDLVQPDKPASPKFIVTLDGVPSPPGYMSDQEEEMCFEGMKPVNQTSASNKGLRGLLHPQQLHLLSRQLEDPDGSFSNAEMTDLSVAQKPEKLLERCKYWPACKNGDECVYHHPISPCKAFPNCKFAEKCLFVHPNCKYDAKCTKADCPFTHMSRRGPVLTPKPAVSSPAPSSNGQFCRYFPACKKMECPFYHPKHCRFNTQCTRPDCTFYHPTITVPPRHALKWIRPQTSE.

M1 is subject to N-acetylmethionine. Over residues 77-103 (TTEPSSLKSPDTSIFDSNVPSNKSSFS) the composition is skewed to polar residues. Residues 77–153 (TTEPSSLKSP…RHSYDDGAST (77 aa)) are disordered. Phosphoserine is present on S85. Residues K99, K139, K175, and K198 each participate in a glycyl lysine isopeptide (Lys-Gly) (interchain with G-Cter in SUMO2) cross-link. Positions 123 to 148 (RPEKRDSRVSTSSQEHKSTNVRHSYD) are enriched in basic and acidic residues. S240 bears the Phosphoserine mark. Glycyl lysine isopeptide (Lys-Gly) (interchain with G-Cter in SUMO2) cross-links involve residues K245, K283, and K295. The segment at 308 to 350 (FSHDGEEEEEDEDYGTRVGSLSSSVSVPAKPERRPSLPPSKQA) is disordered. Residues S309, S327, and S343 each carry the phosphoserine modification. K357 is modified (N6-acetyllysine; alternate). Residue K357 forms a Glycyl lysine isopeptide (Lys-Gly) (interchain with G-Cter in SUMO2); alternate linkage. Positions 367–380 (TKTTNYPAVPQKQT) are enriched in polar residues. The tract at residues 367-386 (TKTTNYPAVPQKQTLPVAPR) is disordered. Residue K378 forms a Glycyl lysine isopeptide (Lys-Gly) (interchain with G-Cter in SUMO2) linkage. Phosphoserine is present on residues S390 and S409. The segment at 400–420 (QGQNRAPRISPPVKEEEAKGD) is disordered. Residues K413 and K489 each participate in a glycyl lysine isopeptide (Lys-Gly) (interchain with G-Cter in SUMO2) cross-link. A phosphoserine mark is found at S498, S515, S527, and S620. C3H1-type zinc fingers lie at residues 595–620 (EKLLERCKYWPACKNGDECVYHHPIS), 621–640 (PCKAFPNCKFAEKCLFVHPN), 641–656 (CKYDAKCTKADCPFTH), 682–699 (CRYFPACKKMECPFYHPK), and 701–719 (CRFNTQCTRPDCTFYHPTI).

This sequence belongs to the ZC3H14 family. As to quaternary structure, homodimer; facilitating circular RNAs (circRNAs) formation. Associates with the spliceosome. Interacts with HOOK2. Interacts with ZFC3H1 in a RNase-sensitive manner.

It localises to the nucleus speckle. Functionally, RNA-binding protein involved in the biogenesis of circular RNAs (circRNAs), which are produced by back-splicing circularization of pre-mRNAs. Acts by binding to both exon-intron boundary and 3'-UTR of pre-mRNAs to promote circRNA biogenesis through dimerization and the association with the spliceosome. Required for spermatogenesis via involvement in circRNA biogenesis. Regulates the pre-mRNA processing of ATP5MC1; preventing its degradation. Also binds the poly(A) tail of mRNAs; controlling poly(A) length in neuronal cells. The protein is Zinc finger CCCH domain-containing protein 14 of Rattus norvegicus (Rat).